Consider the following 292-residue polypeptide: Probable alpha-L-glutamate ligase (292 aa).

In terms of domain architecture, ATP-grasp spans 104–287 (HQLLAAKGID…VATRIIEHVE (184 aa)). Residues K141, 178–179 (EF), D187, and 211–213 (RSN) contribute to the ATP site. D248, E260, and N262 together coordinate Mg(2+). Mn(2+)-binding residues include D248, E260, and N262.

The protein belongs to the RimK family. Mg(2+) is required as a cofactor. The cofactor is Mn(2+).

The polypeptide is Probable alpha-L-glutamate ligase (Stenotrophomonas maltophilia (strain K279a)).